The following is an 88-amino-acid chain: Toxin ICK-12 (88 aa).

Positions 1-19 (MKSIVYMLLFCTFTVVILG) are cleaved as a signal peptide. 4 disulfides stabilise this stretch: Cys-41–Cys-55, Cys-41–Cys-78, Cys-54–Cys-67, and Cys-81–Cys-88.

Belongs to the neurotoxin 27 (Jztx-72) family. ICK-41 subfamily. Expressed by the venom gland.

The protein resides in the secreted. In terms of biological role, probable neurotoxin with ion channel impairing activity. The chain is Toxin ICK-12 from Trittame loki (Brush-footed trapdoor spider).